The following is a 168-amino-acid chain: GTP-dependent dephospho-CoA kinase (168 aa).

GTP contacts are provided by D49, V50, V51, D68, K70, and E120.

The protein belongs to the GTP-dependent DPCK family.

The catalysed reaction is 3'-dephospho-CoA + GTP = GDP + CoA + H(+). Its pathway is cofactor biosynthesis; coenzyme A biosynthesis. Functionally, catalyzes the GTP-dependent phosphorylation of the 3'-hydroxyl group of dephosphocoenzyme A to form coenzyme A (CoA). The polypeptide is GTP-dependent dephospho-CoA kinase (Pyrobaculum calidifontis (strain DSM 21063 / JCM 11548 / VA1)).